The primary structure comprises 483 residues: Zinc finger CCCH domain-containing protein 25 (483 aa).

The C3H1-type zinc-finger motif lies at 157-184; the sequence is RNRAHICSFFIRGECTRGDECPYRHEMP. The 74-residue stretch at 228–301 folds into the RRM domain; sequence RTLYVGGLNS…QRLKLTWGRP (74 aa). 2 disordered regions span residues 298 to 317 and 336 to 483; these read WGRP…QGSV and PPML…GSSQ. Over residues 336 to 351 the composition is skewed to pro residues; sequence PPMLQYYMHPPPPQPP. Low complexity predominate over residues 370 to 380; the sequence is SSSKESGSSTS. A compositionally biased stretch (polar residues) spans 381-391; that stretch reads DNRGASSSSYT. 2 stretches are compositionally biased toward low complexity: residues 392–401 and 409–423; these read MPPHGHYPQH and YGGY…YPPY. The span at 438-459 shows a compositional bias: pro residues; that stretch reads QPGPGSRPNPPHPSSVSAPPPD. Low complexity predominate over residues 460–476; it reads SVSAAPSGSSQQSADAA.

This chain is Zinc finger CCCH domain-containing protein 25, found in Arabidopsis thaliana (Mouse-ear cress).